We begin with the raw amino-acid sequence, 199 residues long: Superoxide dismutase [Fe] (199 aa).

Fe cation is bound by residues His-28, His-80, Asp-162, and His-166.

This sequence belongs to the iron/manganese superoxide dismutase family. In terms of assembly, homodimer. Requires Fe cation as cofactor.

Its subcellular location is the cytoplasm. It catalyses the reaction 2 superoxide + 2 H(+) = H2O2 + O2. In terms of biological role, destroys superoxide anion radicals which are normally produced within the cells and which are toxic to biological systems. In Leptolyngbya boryana (Plectonema boryanum), this protein is Superoxide dismutase [Fe] (sodB).